A 409-amino-acid chain; its full sequence is Mitochondrial inner membrane protein oxa1-2 (409 aa).

The chain crosses the membrane as a helical span at residues valine 76 to proline 96. Topologically, residues histidine 97–proline 114 are mitochondrial intermembrane. Residues tryptophan 115–leucine 135 form a helical membrane-spanning segment. Topologically, residues lysine 136 to proline 188 are mitochondrial matrix. Residues leucine 189–leucine 209 traverse the membrane as a helical segment. The Mitochondrial intermembrane segment spans residues lysine 210–aspartate 235. Residues proline 236–serine 256 form a helical membrane-spanning segment. The Mitochondrial matrix segment spans residues glutamate 257–phenylalanine 275. The chain crosses the membrane as a helical span at residues leucine 276–phenylalanine 296. Residues proline 297–aspartate 409 lie on the Mitochondrial intermembrane side of the membrane. Residues threonine 369–aspartate 409 form a disordered region. The span at glutamate 374–lysine 403 shows a compositional bias: polar residues.

Belongs to the OXA1/ALB3/YidC family.

The protein localises to the mitochondrion inner membrane. Its function is as follows. Required for the insertion of integral membrane proteins into the mitochondrial inner membrane. Essential for the activity and assembly of cytochrome c oxidase. It is essential for viability while oxa101 is not. When both are deleted the cell is non-viable, suggesting that oxa101 act as a back-up for oxa102. This chain is Mitochondrial inner membrane protein oxa1-2 (oxa102), found in Schizosaccharomyces pombe (strain 972 / ATCC 24843) (Fission yeast).